We begin with the raw amino-acid sequence, 76 residues long: Esculentin-2SN1 (76 aa).

Positions 1–22 (MFTMKKSLLFLFFLGTISLSLC) are cleaved as a signal peptide. Residues 23 to 37 (EQERGADEDDGGEEV) constitute a propeptide that is removed on maturation. A disulfide bridge links C70 with C76.

This sequence belongs to the frog skin active peptide (FSAP) family. Esculentin subfamily. Expressed by the skin glands.

The protein localises to the secreted. In terms of biological role, antimicrobial peptide. Active against some Gram-negative and a variety of Gram-positive bacterial strains. Not active against fungi. Shows very weak hemolytic activity against human erythrocytes. The polypeptide is Esculentin-2SN1 (Sylvirana spinulosa (Fine-spined frog)).